Consider the following 299-residue polypeptide: MTESNRLRIAIQKSGRLSTDSQQLLKSCGIKFSINEQRLIAHADNMPIDLLRVRDDDIPGLVMDGVVDLGIIGENVLEEEQIERQTLNKPAEFVKLRQLDFGACRLSLAVPSEFSYADASSLEGLRIATSYPNLLRRFMQQKGISYRDCMLKGSVEVAPRAGLADGICDLVSTGATLEANGLYETEVIYRSMACVIQSTQTQTPSKQALIDRILSRVNGVIRARESKYILLHAPTETLDQIVALLPGAENPTVLPLNDDTNRVAIHAVSTEDLFWDTMEELTALGASSILVMPIEKMMG.

The protein belongs to the ATP phosphoribosyltransferase family. Long subfamily. It depends on Mg(2+) as a cofactor.

The protein resides in the cytoplasm. It carries out the reaction 1-(5-phospho-beta-D-ribosyl)-ATP + diphosphate = 5-phospho-alpha-D-ribose 1-diphosphate + ATP. Its pathway is amino-acid biosynthesis; L-histidine biosynthesis; L-histidine from 5-phospho-alpha-D-ribose 1-diphosphate: step 1/9. With respect to regulation, feedback inhibited by histidine. Its function is as follows. Catalyzes the condensation of ATP and 5-phosphoribose 1-diphosphate to form N'-(5'-phosphoribosyl)-ATP (PR-ATP). Has a crucial role in the pathway because the rate of histidine biosynthesis seems to be controlled primarily by regulation of HisG enzymatic activity. The polypeptide is ATP phosphoribosyltransferase (Shewanella sp. (strain ANA-3)).